We begin with the raw amino-acid sequence, 458 residues long: Argininosuccinate lyase (458 aa).

It belongs to the lyase 1 family. Argininosuccinate lyase subfamily.

The protein resides in the cytoplasm. The enzyme catalyses 2-(N(omega)-L-arginino)succinate = fumarate + L-arginine. It participates in amino-acid biosynthesis; L-arginine biosynthesis; L-arginine from L-ornithine and carbamoyl phosphate: step 3/3. The chain is Argininosuccinate lyase from Geobacter sp. (strain M21).